The primary structure comprises 293 residues: Non-homologous end joining protein Ku (293 aa).

One can recognise a Ku domain in the interval 10 to 195 (ISFGLVHIPV…KLDKRELEMA (186 aa)). The required for dimerization stretch occupies residues 216-229 (SDKIMKLVEEKAAK). The interval 260 to 293 (RSRAGGGKDKGSEKAGADAKGRAKSGASRSRRKA) is disordered. The span at 265-280 (GGKDKGSEKAGADAKG) shows a compositional bias: basic and acidic residues.

Belongs to the prokaryotic Ku family. As to quaternary structure, homodimer, may form higher-order multimers on DNA. Non-dimerized protein does not stimulate LigD ligase activity. Probably interacts with LigD.

In terms of biological role, with LigD forms a non-homologous end joining (NHEJ) DNA repair enzyme, which repairs dsDNA breaks with reduced fidelity. Stimulates rNTP addition to DSB and end joining (ligation) of linear DNA by LigD, on 3'-overhangs and probably also 5'-overhangs and blunt dsDNA breaks. Binds both ends of linear dsDNA protecting it from exonuclease activity. This is Non-homologous end joining protein Ku from Pseudomonas aeruginosa (strain ATCC 15692 / DSM 22644 / CIP 104116 / JCM 14847 / LMG 12228 / 1C / PRS 101 / PAO1).